A 153-amino-acid polypeptide reads, in one-letter code: Superoxide dismutase [Cu-Zn] (153 aa).

Residues H45, H47, and H62 each contribute to the Cu cation site. C56 and C145 are joined by a disulfide. Residues H62, H70, H79, and D82 each contribute to the Zn(2+) site. A Cu cation-binding site is contributed by H119.

This sequence belongs to the Cu-Zn superoxide dismutase family. As to quaternary structure, homodimer. It depends on Cu cation as a cofactor. Zn(2+) serves as cofactor.

It is found in the cytoplasm. The catalysed reaction is 2 superoxide + 2 H(+) = H2O2 + O2. Destroys radicals which are normally produced within the cells and which are toxic to biological systems. The protein is Superoxide dismutase [Cu-Zn] of Ceratitis capitata (Mediterranean fruit fly).